Reading from the N-terminus, the 195-residue chain is Imidazoleglycerol-phosphate dehydratase (195 aa).

The protein belongs to the imidazoleglycerol-phosphate dehydratase family.

The protein resides in the cytoplasm. The catalysed reaction is D-erythro-1-(imidazol-4-yl)glycerol 3-phosphate = 3-(imidazol-4-yl)-2-oxopropyl phosphate + H2O. The protein operates within amino-acid biosynthesis; L-histidine biosynthesis; L-histidine from 5-phospho-alpha-D-ribose 1-diphosphate: step 6/9. This Campylobacter curvus (strain 525.92) protein is Imidazoleglycerol-phosphate dehydratase.